Reading from the N-terminus, the 327-residue chain is Zinc transport protein ZntB (327 aa).

At 1–273 (MEAIKGSDVN…ARRTYTMSLM (273 aa)) the chain is on the cytoplasmic side. A helical membrane pass occupies residues 274-294 (AMVFLPSTFLTGLFGVNLGGI). Topologically, residues 295–300 (PGGGWQ) are periplasmic. Residues 301–321 (FGFSIFCILLVVLIGGVALWL) form a helical membrane-spanning segment. At 322–327 (HRSKWL) the chain is on the cytoplasmic side.

Belongs to the CorA metal ion transporter (MIT) (TC 1.A.35) family.

The protein localises to the cell inner membrane. It catalyses the reaction Zn(2+)(out) + H(+)(out) = Zn(2+)(in) + H(+)(in). Its function is as follows. Zinc transporter. Acts as a Zn(2+):proton symporter, which likely mediates zinc ion uptake. In Escherichia coli O6:K15:H31 (strain 536 / UPEC), this protein is Zinc transport protein ZntB.